Consider the following 95-residue polypeptide: Co-chaperonin GroES (95 aa).

It belongs to the GroES chaperonin family. In terms of assembly, heptamer of 7 subunits arranged in a ring. Interacts with the chaperonin GroEL.

The protein localises to the cytoplasm. Functionally, together with the chaperonin GroEL, plays an essential role in assisting protein folding. The GroEL-GroES system forms a nano-cage that allows encapsulation of the non-native substrate proteins and provides a physical environment optimized to promote and accelerate protein folding. GroES binds to the apical surface of the GroEL ring, thereby capping the opening of the GroEL channel. In Methylocella silvestris (strain DSM 15510 / CIP 108128 / LMG 27833 / NCIMB 13906 / BL2), this protein is Co-chaperonin GroES.